The chain runs to 253 residues: Octanoyltransferase (253 aa).

In terms of domain architecture, BPL/LPL catalytic spans 47 to 236 (PETPDQVWLV…ALCEVLAARE (190 aa)). Substrate is bound by residues 87-94 (RGGQITYH), 159-161 (ALG), and 172-174 (GVS). The active-site Acyl-thioester intermediate is the Cys190.

It belongs to the LipB family.

It is found in the cytoplasm. The catalysed reaction is octanoyl-[ACP] + L-lysyl-[protein] = N(6)-octanoyl-L-lysyl-[protein] + holo-[ACP] + H(+). The protein operates within protein modification; protein lipoylation via endogenous pathway; protein N(6)-(lipoyl)lysine from octanoyl-[acyl-carrier-protein]: step 1/2. Functionally, catalyzes the transfer of endogenously produced octanoic acid from octanoyl-acyl-carrier-protein onto the lipoyl domains of lipoate-dependent enzymes. Lipoyl-ACP can also act as a substrate although octanoyl-ACP is likely to be the physiological substrate. The chain is Octanoyltransferase from Cupriavidus pinatubonensis (strain JMP 134 / LMG 1197) (Cupriavidus necator (strain JMP 134)).